The primary structure comprises 315 residues: MSFSSDVRNELARIIPEKECCRKAELAALLAISGDLVVGEDGRRILKVQADNAATARKIITLLKENYQIPSTFKALEQKRFKRKRIYEVNVLLDGEDEALNKELEEILLLREKETTPVLNRSLLGRTCCKRAYLRGIFLSRGSINRPEGEYHLELVLNDSRMALAVQKMLDKFALEPGLVERKNYLVVYLKESEKIVDFLRVVEASRALLNFENVRIIKSVRNNVNRQVNCETANLSKTIDASLRQIELIKRLLEEQGLEILPGNLRDLAEMRMSYTDASLKELGDLLDPPLSKSGVAYRMRKLEESVKEILQED.

The segment at residues 280–313 (SLKELGDLLDPPLSKSGVAYRMRKLEESVKEILQ) is a DNA-binding region (H-T-H motif).

The protein belongs to the WhiA family.

Its function is as follows. Involved in cell division and chromosome segregation. This Syntrophomonas wolfei subsp. wolfei (strain DSM 2245B / Goettingen) protein is Probable cell division protein WhiA.